Consider the following 241-residue polypeptide: 2,3,4,5-tetrahydropyridine-2,6-dicarboxylate N-acetyltransferase (241 aa).

The protein belongs to the transferase hexapeptide repeat family. DapH subfamily.

The catalysed reaction is (S)-2,3,4,5-tetrahydrodipicolinate + acetyl-CoA + H2O = L-2-acetamido-6-oxoheptanedioate + CoA. The protein operates within amino-acid biosynthesis; L-lysine biosynthesis via DAP pathway; LL-2,6-diaminopimelate from (S)-tetrahydrodipicolinate (acetylase route): step 1/3. Functionally, catalyzes the transfer of an acetyl group from acetyl-CoA to tetrahydrodipicolinate. The chain is 2,3,4,5-tetrahydropyridine-2,6-dicarboxylate N-acetyltransferase from Thermoanaerobacter pseudethanolicus (strain ATCC 33223 / 39E) (Clostridium thermohydrosulfuricum).